The following is a 345-amino-acid chain: G-protein coupled receptor family C group 5 member D (345 aa).

At 1–27 (MYKDCIESTGDYFLLCDAEGPWGIILE) the chain is on the extracellular side. A helical transmembrane segment spans residues 28–48 (SLAILGIVVTILLLLAFLFLM). Over 49–63 (RKIQDCSQWNVLPTQ) the chain is Cytoplasmic. Residues 64–84 (LLFLLSVLGLFGLAFAFIIEL) traverse the membrane as a helical segment. Topologically, residues 85–93 (NQQTAPVRY) are extracellular. Residues 94–114 (FLFGVLFALCFSCLLAHASNL) form a helical membrane-spanning segment. The Cytoplasmic portion of the chain corresponds to 115–123 (VKLVRGCVS). Residues 124-144 (FSWTTILCIAIGCSLLQIIIA) traverse the membrane as a helical segment. Topologically, residues 145–167 (TEYVTLIMTRGMMFVNMTPCQLN) are extracellular. A helical transmembrane segment spans residues 168-188 (VDFVVLLVYVLFLMALTFFVS). Residues 189-204 (KATFCGPCENWKQHGR) are Cytoplasmic-facing. A helical membrane pass occupies residues 205–225 (LIFITVLFSIIIWVVWISMLL). Residues 226 to 239 (RGNPQFQRQPQWDD) are Extracellular-facing. Residues 240–260 (PVVCIALVTNAWVFLLLYIVP) traverse the membrane as a helical segment. Topologically, residues 261–345 (ELCILYRSCR…LSPQQDAGGV (85 aa)) are cytoplasmic.

It belongs to the G-protein coupled receptor 3 family. As to quaternary structure, homodimer. Widely expressed in the peripheral system. Expression pattern is high in pancreas, medium in kidney, small intestine, spleen and testis, low in lung, colon, leukocyte, prostate and thymus and not detectable in brain, heart, liver, placenta, skeletal muscle and ovary.

The protein resides in the cell membrane. Functionally, G-protein coupled receptor involved in hard keratin expression and likely plays a role in the development of hair and nails. The polypeptide is G-protein coupled receptor family C group 5 member D (GPRC5D) (Homo sapiens (Human)).